A 1033-amino-acid chain; its full sequence is PDZ domain-containing protein 7 (1033 aa).

PDZ domains lie at 86-168 (SVRV…RMGR) and 210-293 (IVHL…ETGR). The span at 323 to 344 (ESSSSVSSCASSAPYSSGSLPS) shows a compositional bias: low complexity. Disordered regions lie at residues 323 to 380 (ESSS…GGRV), 444 to 464 (KQQR…LQRS), 754 to 864 (EPLS…KTVT), and 943 to 1033 (MELV…PRIP). Residues 770 to 784 (AQSRSRSRSRSRSRS) are compositionally biased toward basic residues. Low complexity predominate over residues 785–797 (SRGQGKSPGRRSP). In terms of domain architecture, PDZ 3 spans 862-934 (TVTLSKMKQS…QRAVDTIRRA (73 aa)). The segment covering 991 to 1000 (PEPPTNPQTP) has biased composition (pro residues).

As to quaternary structure, homodimerizes (via PDZ2 domain). Component of USH2 complex, composed of ADGRV1, PDZD7, USH2A and WHRN. Interacts (via PDZ domains) with WHRN; the interaction is direct. Interacts with USH1G. Interacts with ADGRV1 (via the cytoplasmic region). Interacts with USH2A (via the cytoplasmic region). Interacts with MYO7A (via MyTH4-FERM domains). In terms of tissue distribution, weakly expressed in the inner ear. Expressed in the retinal pigment epithelium.

The protein localises to the cell projection. The protein resides in the cilium. It localises to the nucleus. Its subcellular location is the stereocilium. Functionally, in cochlear developing hair cells, essential in organizing the USH2 complex at stereocilia ankle links. Blocks inhibition of adenylate cyclase activity mediated by ADGRV1. The protein is PDZ domain-containing protein 7 of Homo sapiens (Human).